The chain runs to 71 residues: Large ribosomal subunit protein uL29 (71 aa).

The protein belongs to the universal ribosomal protein uL29 family. In terms of assembly, part of the 50S ribosomal subunit. Interacts with protein L23.

Stabilizes the tertiary rRNA structure within the 23S rRNA domain (domain I) to which it binds. Located at the polypeptide exit tunnel on the outside of the subunit. The chain is Large ribosomal subunit protein uL29 (rpl29) from Haloarcula marismortui (strain ATCC 43049 / DSM 3752 / JCM 8966 / VKM B-1809) (Halobacterium marismortui).